Here is a 291-residue protein sequence, read N- to C-terminus: ATP synthase gamma chain (291 aa).

The protein belongs to the ATPase gamma chain family. As to quaternary structure, F-type ATPases have 2 components, CF(1) - the catalytic core - and CF(0) - the membrane proton channel. CF(1) has five subunits: alpha(3), beta(3), gamma(1), delta(1), epsilon(1). CF(0) has three main subunits: a, b and c.

The protein resides in the cell inner membrane. Produces ATP from ADP in the presence of a proton gradient across the membrane. The gamma chain is believed to be important in regulating ATPase activity and the flow of protons through the CF(0) complex. This Chlorobium limicola (strain DSM 245 / NBRC 103803 / 6330) protein is ATP synthase gamma chain.